Reading from the N-terminus, the 334-residue chain is Beta-ketoacyl-[acyl-carrier-protein] synthase III (334 aa).

Active-site residues include Cys-114 and His-260. Residues 261 to 265 (QANLR) are ACP-binding. Asn-290 is a catalytic residue.

It belongs to the thiolase-like superfamily. FabH family. Homodimer.

The protein resides in the cytoplasm. The enzyme catalyses malonyl-[ACP] + acetyl-CoA + H(+) = 3-oxobutanoyl-[ACP] + CO2 + CoA. Its pathway is lipid metabolism; fatty acid biosynthesis. Its function is as follows. Catalyzes the condensation reaction of fatty acid synthesis by the addition to an acyl acceptor of two carbons from malonyl-ACP. Catalyzes the first condensation reaction which initiates fatty acid synthesis and may therefore play a role in governing the total rate of fatty acid production. Possesses both acetoacetyl-ACP synthase and acetyl transacylase activities. Its substrate specificity determines the biosynthesis of branched-chain and/or straight-chain of fatty acids. This is Beta-ketoacyl-[acyl-carrier-protein] synthase III from Clostridium tetani (strain Massachusetts / E88).